Reading from the N-terminus, the 283-residue chain is Polyamine aminopropyltransferase (283 aa).

The region spanning glutamate 2 to lysine 237 is the PABS domain. Glutamine 31 provides a ligand contact to S-methyl-5'-thioadenosine. Spermidine-binding residues include histidine 62 and aspartate 86. S-methyl-5'-thioadenosine is bound by residues glutamate 106 and aspartate 137–glycine 138. Aspartate 155 functions as the Proton acceptor in the catalytic mechanism. Residue aspartate 155–aspartate 158 participates in spermidine binding. Proline 162 contributes to the S-methyl-5'-thioadenosine binding site.

This sequence belongs to the spermidine/spermine synthase family. As to quaternary structure, homodimer or homotetramer.

Its subcellular location is the cytoplasm. It catalyses the reaction S-adenosyl 3-(methylsulfanyl)propylamine + putrescine = S-methyl-5'-thioadenosine + spermidine + H(+). The protein operates within amine and polyamine biosynthesis; spermidine biosynthesis; spermidine from putrescine: step 1/1. In terms of biological role, catalyzes the irreversible transfer of a propylamine group from the amino donor S-adenosylmethioninamine (decarboxy-AdoMet) to putrescine (1,4-diaminobutane) to yield spermidine. The polypeptide is Polyamine aminopropyltransferase (Clostridium perfringens (strain 13 / Type A)).